Reading from the N-terminus, the 191-residue chain is Penicillin-binding protein activator LpoB (191 aa).

The first 16 residues, 1-16 (MKRILFVILSTMLLAS), serve as a signal peptide directing secretion. Cysteine 17 carries N-palmitoyl cysteine lipidation. The S-diacylglycerol cysteine moiety is linked to residue cysteine 17. A disordered region spans residues 25–48 (QPAPVTPVEPKEKQETTPIEPSEK).

This sequence belongs to the LpoB family. Interacts with PBP1b.

Its subcellular location is the cell outer membrane. Its function is as follows. Regulator of peptidoglycan synthesis that is essential for the function of penicillin-binding protein 1B (PBP1b). This is Penicillin-binding protein activator LpoB from Xenorhabdus nematophila (strain ATCC 19061 / DSM 3370 / CCUG 14189 / LMG 1036 / NCIMB 9965 / AN6).